The chain runs to 146 residues: Hemoglobin subunit beta (146 aa).

Residues 2 to 146 (HWTAEEKQLI…VAHALARKYH (145 aa)) enclose the Globin domain. His-63 and His-92 together coordinate heme b.

The protein belongs to the globin family. As to quaternary structure, heterotetramer of two alpha chains and two beta chains. Red blood cells.

Involved in oxygen transport from the lung to the various peripheral tissues. In Aquila chrysaetos (Golden eagle), this protein is Hemoglobin subunit beta (HBB).